Consider the following 185-residue polypeptide: dCTP deaminase (185 aa).

DCTP contacts are provided by residues 107–112, 131–133, Gln152, Tyr166, and Gln176; these read KSTYAR and TLE. Catalysis depends on Glu133, which acts as the Proton donor/acceptor.

It belongs to the dCTP deaminase family. Homotrimer.

The enzyme catalyses dCTP + H2O + H(+) = dUTP + NH4(+). The protein operates within pyrimidine metabolism; dUMP biosynthesis; dUMP from dCTP (dUTP route): step 1/2. In terms of biological role, catalyzes the deamination of dCTP to dUTP. In Wolbachia sp. subsp. Brugia malayi (strain TRS), this protein is dCTP deaminase.